The sequence spans 524 residues: Adhesion G-protein coupled receptor G5 (524 aa).

The signal sequence occupies residues 1–23 (MDPHGALFFYLCLLAAQVVLVET). Topologically, residues 24–246 (LSDLLVLMKR…PAELQVPLEY (223 aa)) are extracellular. N-linked (GlcNAc...) asparagine glycosylation is found at asparagine 58, asparagine 65, asparagine 96, asparagine 143, asparagine 169, and asparagine 175. The 162-residue stretch at 74 to 235 (QSLVFKLSCD…AVLMQLSGDP (162 aa)) folds into the GAIN-B domain. Disulfide bonds link cysteine 185-cysteine 217 and cysteine 205-cysteine 219. Positions 185 to 235 (CVFWKEGASKSSWGAWSPEGCYTEQPSATQVLCHCNHLTYFAVLMQLSGDP) are GPS. Residues 224–232 (YFAVLMQLS) form a stachel region. The chain crosses the membrane as a helical span at residues 247 to 267 (ISFVGCSISIVASLLTILLYA). Residues 268-284 (QSRKQSDSTTRIHMNLN) lie on the Cytoplasmic side of the membrane. A helical transmembrane segment spans residues 285–305 (GSVLLLNVTFLLSSQMTLPTM). Over 306-319 (PRPVCKVLAAVLHY) the chain is Extracellular. Cysteine 310 and cysteine 400 are oxidised to a cystine. The helical transmembrane segment at 320 to 340 (ALLSSLTWMAIEGFNLYLFLG) threads the bilayer. Residues 341 to 351 (RVYNAYIRRYL) are Cytoplasmic-facing. A helical transmembrane segment spans residues 352–372 (LKLCMLGWGFPALLVLLLLMI). Residues 373–413 (KSSVYGPCVTSLSKSQENGTGFQNVSMCWIRSPMVHSILVM) are Extracellular-facing. 2 N-linked (GlcNAc...) asparagine glycosylation sites follow: asparagine 390 and asparagine 396. Residues 414–434 (GYGGFTSLFNLVVLAWALWIL) form a helical membrane-spanning segment. The Cytoplasmic segment spans residues 435–453 (CRLRAREKALSPWAYRDTA). Residues 454–476 (MVLGLTVLLGTTWTLAFFSFGVF) form a helical membrane-spanning segment. Residues 477-480 (LLPQ) are Extracellular-facing. The chain crosses the membrane as a helical span at residues 481–500 (LFLFTIFNSLYGFFLFLWFC). The Cytoplasmic portion of the chain corresponds to 501–524 (SQKRYSDAEAKAEMEAVSSSQMTH).

The protein belongs to the G-protein coupled receptor 2 family. Adhesion G-protein coupled receptor (ADGR) subfamily. In terms of assembly, heterodimer of 2 chains generated by proteolytic processing; the large extracellular N-terminal fragment and the membrane-bound C-terminal fragment predominantly remain associated and non-covalently linked. Post-translationally, autoproteolytically processed at the GPS region of the GAIN-B domain; this cleavage modulates receptor activity. In terms of tissue distribution, expressed at least in kidney, heart, brain and spleen. As to expression, isoform 1 is predominant in spleen. In the kidney, both isoform 1 and isoform 2 are expressed at similar levels. Isoform 2 is the major form in heart and brain. In the kidney, both isoform 1 and isoform 2 are expressed at similar levels.

Its subcellular location is the cell membrane. Forms a heterodimer of 2 chains generated by proteolytic processing that remain associated through non-covalent interactions mediated by the GAIN-B domain. In the inactivated receptor, the Stachel sequence (also named stalk) is embedded in the GAIN-B domain, where it adopts a beta-strand conformation. On activation, the Stachel moves into the 7 transmembrane region and adopts a twisted hook-shaped configuration that forms contacts within the receptor, leading to coupling of a G-alpha protein, which activates signaling. The cleaved GAIN-B and N-terminal domains can then dissociate from the rest of the receptor. In terms of biological role, orphan adhesion G-protein coupled receptor (aGPCR). Ligand binding causes a conformation change that triggers signaling via guanine nucleotide-binding proteins (G proteins) and modulates the activity of downstream effectors, such as adenylate cyclase. ADGRG5 is specifically coupled to G(s) G proteins and mediates activation of adenylate cyclase activity. Isoform 1, but not isoform 2, is constitutively active, as evidenced by elevated basal cAMP levels, and responds to mechanical activation (shaking). This Mus musculus (Mouse) protein is Adhesion G-protein coupled receptor G5.